The chain runs to 29 residues: uncharacterized protein (29 aa).

This is an uncharacterized protein from Saccharomyces cerevisiae (strain ATCC 204508 / S288c) (Baker's yeast).